Consider the following 89-residue polypeptide: Small ribosomal subunit protein uS15 (89 aa).

Belongs to the universal ribosomal protein uS15 family. In terms of assembly, part of the 30S ribosomal subunit. Forms a bridge to the 50S subunit in the 70S ribosome, contacting the 23S rRNA.

One of the primary rRNA binding proteins, it binds directly to 16S rRNA where it helps nucleate assembly of the platform of the 30S subunit by binding and bridging several RNA helices of the 16S rRNA. Functionally, forms an intersubunit bridge (bridge B4) with the 23S rRNA of the 50S subunit in the ribosome. The protein is Small ribosomal subunit protein uS15 of Staphylococcus aureus (strain JH1).